A 698-amino-acid polypeptide reads, in one-letter code: Polyribonucleotide nucleotidyltransferase (698 aa).

Aspartate 490 and aspartate 496 together coordinate Mg(2+). The 60-residue stretch at 557–616 (PKVVTMTIKPDKIRDVIGPGGKKINEIIDETGVKLDIEQDGTIFIGAVDQAMINRAREII) folds into the KH domain. Residues 626 to 694 (GQTYQATVKR…KQGRVNASHR (69 aa)) form the S1 motif domain.

The protein belongs to the polyribonucleotide nucleotidyltransferase family. Mg(2+) is required as a cofactor.

It is found in the cytoplasm. The enzyme catalyses RNA(n+1) + phosphate = RNA(n) + a ribonucleoside 5'-diphosphate. Involved in mRNA degradation. Catalyzes the phosphorolysis of single-stranded polyribonucleotides processively in the 3'- to 5'-direction. The chain is Polyribonucleotide nucleotidyltransferase from Staphylococcus aureus (strain Mu3 / ATCC 700698).